A 107-amino-acid chain; its full sequence is Pre-mRNA-splicing factor RDS3 (107 aa).

It belongs to the PHF5 family. In terms of assembly, component of the spliceosome where it interacts with CUS1, HSH49, HSH155, IST3 and RSE1. Also interacts with YRA1.

The protein resides in the nucleus. Its function is as follows. Required for pre-mRNA splicing. Involved in regulation of drug sensitivity and may play a role in multidrug resistance. The sequence is that of Pre-mRNA-splicing factor RDS3 (RDS3) from Saccharomyces cerevisiae (strain ATCC 204508 / S288c) (Baker's yeast).